We begin with the raw amino-acid sequence, 205 residues long: Small ribosomal subunit protein uS4 (205 aa).

The disordered stretch occupies residues 18 to 46; the sequence is NIWGRPKSPVNRREYGPGQHGQRRKGKLS. In terms of domain architecture, S4 RNA-binding spans 94-157; the sequence is RRLDTVVFRA…KQLAIVLEAT (64 aa).

This sequence belongs to the universal ribosomal protein uS4 family. Part of the 30S ribosomal subunit. Contacts protein S5. The interaction surface between S4 and S5 is involved in control of translational fidelity.

In terms of biological role, one of the primary rRNA binding proteins, it binds directly to 16S rRNA where it nucleates assembly of the body of the 30S subunit. Functionally, with S5 and S12 plays an important role in translational accuracy. This Bradyrhizobium sp. (strain BTAi1 / ATCC BAA-1182) protein is Small ribosomal subunit protein uS4.